The following is a 206-amino-acid chain: Large ribosomal subunit protein uL4 (206 aa).

The segment at Gly-46–Thr-77 is disordered. Residues His-58–Gly-70 are compositionally biased toward basic residues.

Belongs to the universal ribosomal protein uL4 family. Part of the 50S ribosomal subunit.

Its function is as follows. One of the primary rRNA binding proteins, this protein initially binds near the 5'-end of the 23S rRNA. It is important during the early stages of 50S assembly. It makes multiple contacts with different domains of the 23S rRNA in the assembled 50S subunit and ribosome. Forms part of the polypeptide exit tunnel. This is Large ribosomal subunit protein uL4 from Polaromonas sp. (strain JS666 / ATCC BAA-500).